The primary structure comprises 158 residues: Proteinase inhibitor type-2 (158 aa).

Residues 1-24 (MAIHKEVSFLAYLLVLGMLLFVSA) form the signal peptide. 2 repeat units span residues 29 to 86 (DAKA…HPKN) and 87 to 146 (PKAC…IEPK). 8 cysteine pairs are disulfide-bonded: cysteine 33-cysteine 121, cysteine 37-cysteine 117, cysteine 45-cysteine 127, cysteine 57-cysteine 94, cysteine 60-cysteine 78, cysteine 61-cysteine 90, cysteine 67-cysteine 103, and cysteine 120-cysteine 138.

This sequence belongs to the protease inhibitor I20 (potato type II proteinase inhibitor) family.

This Solanum tuberosum (Potato) protein is Proteinase inhibitor type-2.